Here is a 614-residue protein sequence, read N- to C-terminus: MKRDRLGRFLSPGIARQRGGSGGGCGSGRTRGRPSRSGGTSADGAAAQLSWGSMTRSCGDTGDDGTDEAGAGRTLAMGHCRLCHGKFSSRSLRSISDRVPGETSERLSPGERVFIRDFQRLLGVAVHQDPALPQSVCKNCYTQFYQCHSLLRTFLQRVNVSPAGQRKPCTKVGVQPTTVAEEGACVADLIASSPRCLHGLVGWVHEHAVSCGSLPSLQRTLSSEYCGIIQAVWGCDQGHDFTMDTASSCRALFLDSALAVKWAWGKDLSPRLAQNSESNPTGAASRLCQARETQVGSETKTLPSVDVALLHSHGDSVGPGLGPCTQPHLAPSEAPGQLGETQVPSSTSDDRVKDEFSDLSEGDFLSEDESDKKQTPQSSDESFEPYPEKKVSGKKSEGREAKRPEEPKIRKKPGPKPGWKKKLRCEREELPTIYKCPYQGCTAVYRGADGMKKHIKEHHEEVRERPCPHPGCNKVFMIDRYLQRHVKLIHTEVRNYICDECGQTFKQRKHLLVHQMRHSGAKPLQCEVCGFQCRQRASLKYHMTKHKAETELDFACDQCGRRFEKAHNLNVHMSMVHPLTQAQDRALPLEAEPPPGPLSPSGTMEGQAVKPEPT.

The tract at residues M1–A46 is disordered. A compositionally biased stretch (gly residues) spans G19–R29. One can recognise a ZAD domain in the interval G78 to G164. 4 residues coordinate Zn(2+): C80, C83, C137, and C140. Residues R271 to K422 form a disordered region. Composition is skewed to polar residues over residues L272–G282 and R291–L302. Residues S357 to E369 show a composition bias toward acidic residues. The segment covering Y386 to K408 has biased composition (basic and acidic residues). Residues I409 to K422 are compositionally biased toward basic residues. 5 C2H2-type zinc fingers span residues Y434–H458, R465–H490, Y496–H518, L524–H546, and F554–H577. The tract at residues P588–T614 is disordered.

Found in all the examined tissues, with highest levels in kidney, liver, lung, and spleen.

The protein resides in the nucleus. The protein localises to the chromosome. Its subcellular location is the centromere. It is found in the kinetochore. In terms of biological role, may be involved in transcriptional regulation. The protein is Zinc finger protein 276 (Znf276) of Mus musculus (Mouse).